Consider the following 676-residue polypeptide: Vitamin K-dependent protein S (676 aa).

Residues 1 to 24 (MRVLGGRCGALLACLLLVLPVSEA) form the signal peptide. The propeptide occupies 25–41 (NFLSKQQASQVLVRKRR). Residues 42–87 (ANSLLEETKQGNLERECIEELCNKEEAREVFENDPETDYFYPKYLV) enclose the Gla domain. Residues glutamate 47, glutamate 48, glutamate 55, glutamate 57, glutamate 60, glutamate 61, glutamate 66, glutamate 67, glutamate 70, glutamate 73, and glutamate 77 each carry the 4-carboxyglutamate modification. An intrachain disulfide couples cysteine 58 to cysteine 63. A thrombin-sensitive region spans residues 88–116 (CLRSFQTGLFTAARQSTNAYPDLRSCVNA). One can recognise an EGF-like 1 domain in the interval 117 to 155 (IPDQCSPLPCNEDGYMSCKDGKASFTCTCKPGWQGEKCE). 13 disulfide bridges follow: cysteine 121-cysteine 134, cysteine 126-cysteine 143, cysteine 145-cysteine 154, cysteine 161-cysteine 175, cysteine 171-cysteine 184, cysteine 186-cysteine 199, cysteine 205-cysteine 217, cysteine 212-cysteine 226, cysteine 228-cysteine 241, cysteine 247-cysteine 256, cysteine 252-cysteine 265, cysteine 267-cysteine 282, and cysteine 449-cysteine 475. Aspartate 136 is subject to (3R)-3-hydroxyaspartate. One can recognise an EGF-like 2; calcium-binding domain in the interval 157–200 (DINECKDPSNINGGCSQICDNTPGSYHCSCKNGFVMLSNKKDCK). Positions 201-242 (DVDECSLKPSICGTAVCKNIPGDFECECPEGYRYNLKSKSCE) constitute an EGF-like 3; calcium-binding domain. The region spanning 243–283 (DIDECSENMCAQLCVNYPGGYTCYCDGKKGFKLAQDQKSCE) is the EGF-like 4; calcium-binding domain. Laminin G-like domains follow at residues 299–475 (LLYL…NKHC) and 484–666 (YYPG…AHSC). Asparagine 499, asparagine 509, and asparagine 530 each carry an N-linked (GlcNAc...) asparagine glycan. A disulfide bond links cysteine 639 and cysteine 666.

In terms of processing, the iron and 2-oxoglutarate dependent 3-hydroxylation of aspartate and asparagine is (R) stereospecific within EGF domains. In terms of tissue distribution, plasma.

The protein localises to the secreted. Anticoagulant plasma protein; it is a cofactor to activated protein C in the degradation of coagulation factors Va and VIIIa. It helps to prevent coagulation and stimulating fibrinolysis. This is Vitamin K-dependent protein S (PROS1) from Homo sapiens (Human).